A 417-amino-acid polypeptide reads, in one-letter code: XO lethal protein 1 (417 aa).

The tract at residues 373-417 (VSPGETSSEGISDEHHYEEYDEDDIMEEEEAPSARQDDTYDEDEE) is disordered. A compositionally biased stretch (acidic residues) spans 391–403 (EYDEDDIMEEEEA).

Belongs to the GHMP kinase family. Xol-1 subfamily.

It is found in the nucleus. Functionally, sex-determining factor that is required for sexual differentiation and X chromosome dosage compensation to promote male development. High expression during gastrulation triggers male development, while low expression at that time triggers hermaphrodite development. Although related to GHMP kinase, its mode of action remains unclear. The polypeptide is XO lethal protein 1 (Caenorhabditis elegans).